Here is a 470-residue protein sequence, read N- to C-terminus: MAAVASGQLTQNPLQKVWVPLSLHRLRRRGSTVPQFTNCPTMVILVGLRRPGKTYISRKLTRYLNWIGMPTRVFNVGQYRREAVQSYKNYEFFRHDNEEAMQIRRQCALAALQDVRTYLSSEEGQVAVFDATNTTRERRALIMQFARENGYKVLFVESICDDPAIIEENIKQVKLSSPDYKGCTPEEAVADFLQRIECYKATYEPLDEQLDSGLSYIKIFDVGVRYLANRVQGHVQSRTVYYLMNTHVTPRAIYLSRHGESQLNLKGRIGGDAGLSTRGRQYAQALAEFIRSQSIRELKVWTSHMKRTIETAEALGVPYEQWKALNEIDAGVCEEMTYEEIQERYPEEFALRDQDKYRYRYPKGESYEDLVQRLEPVIMELERQENVLVICHQAVMRCLLAYFLDKSSEELPYLRCPLHTVLKLTPVAYGCEVESIFLNVEAVNTHRERPQNVDISRPPAEALVTVPEHY.

A 6-phosphofructo-2-kinase region spans residues 1–249 (MAAVASGQLT…VYYLMNTHVT (249 aa)). A Phosphoserine; by PKA modification is found at S31. An ATP-binding site is contributed by 47–55 (GLRRPGKTY). Residues R80 and R104 each contribute to the beta-D-fructose 6-phosphate site. Residue D130 is part of the active site. Residues T132 and R138 each coordinate beta-D-fructose 6-phosphate. C160 is a catalytic residue. 169–174 (NIKQVK) is an ATP binding site. K174, R195, and Y199 together coordinate beta-D-fructose 6-phosphate. The segment at 250–469 (PRAIYLSRHG…AEALVTVPEH (220 aa)) is fructose-2,6-bisphosphatase. R257 is a beta-D-fructose 2,6-bisphosphate binding site. The active-site Tele-phosphohistidine intermediate is the H258. Beta-D-fructose 2,6-bisphosphate contacts are provided by N264 and G270. The active-site Proton donor/acceptor is the E327. Beta-D-fructose 2,6-bisphosphate contacts are provided by Y338, R352, K356, Y367, Q393, and R397. 349 to 352 (FALR) serves as a coordination point for ATP. ATP contacts are provided by residues 393-397 (QAVMR) and Y429.

It in the C-terminal section; belongs to the phosphoglycerate mutase family. Homodimer. Liver.

It catalyses the reaction beta-D-fructose 2,6-bisphosphate + H2O = beta-D-fructose 6-phosphate + phosphate. The catalysed reaction is beta-D-fructose 6-phosphate + ATP = beta-D-fructose 2,6-bisphosphate + ADP + H(+). Its activity is regulated as follows. Phosphorylation results in inhibition of the kinase activity. Functionally, synthesis and degradation of fructose 2,6-bisphosphate. The sequence is that of 6-phosphofructo-2-kinase/fructose-2,6-bisphosphatase from Gallus gallus (Chicken).